An 88-amino-acid chain; its full sequence is Small ribosomal subunit protein uS15 (88 aa).

It belongs to the universal ribosomal protein uS15 family. As to quaternary structure, part of the 30S ribosomal subunit. Forms a bridge to the 50S subunit in the 70S ribosome, contacting the 23S rRNA.

In terms of biological role, one of the primary rRNA binding proteins, it binds directly to 16S rRNA where it helps nucleate assembly of the platform of the 30S subunit by binding and bridging several RNA helices of the 16S rRNA. Forms an intersubunit bridge (bridge B4) with the 23S rRNA of the 50S subunit in the ribosome. The protein is Small ribosomal subunit protein uS15 of Geobacter sp. (strain M21).